Reading from the N-terminus, the 258-residue chain is Intron-associated endonuclease 2 (258 aa).

The region spanning 14-96 is the GIY-YIG domain; it reads SVAFTYMVRF…RKYFNNEFIL (83 aa).

In terms of biological role, this endonuclease is specific to the nrdD gene splice junction and is involved in intron homing. This chain is Intron-associated endonuclease 2 (ITEVIIR), found in Escherichia coli (Bacteriophage T4).